Consider the following 207-residue polypeptide: p-benzoquinone reductase (207 aa).

The Flavodoxin-like domain occupies 5–196; sequence IQIVFYSSYG…QIARFQGKHV (192 aa). Residues 11-16, 84-86, 119-125, and H140 each bind FMN; these read SSYGHI, TRF, and STASQHG. An NADP(+)-binding site is contributed by Y13.

It belongs to the WrbA family. In terms of assembly, homodimer. It depends on FMN as a cofactor.

It catalyses the reaction 1,4-benzoquinone + NADPH + H(+) = hydroquinone + NADP(+). It participates in xenobiotic degradation; 4-nitrophenol degradation. In terms of biological role, involved in the degradation of para-nitrophenol (PNP). Catalyzes the reduction of p-benzoquinone to hydroquinone. The protein is p-benzoquinone reductase (pnpB) of Pseudomonas sp. (strain WBC-3).